A 1265-amino-acid chain; its full sequence is Protein diaphanous homolog 1 (1265 aa).

Position 1 is an N-acetylmethionine (methionine 1). The segment covering 1–12 (MEPSGGGLGPGR) has biased composition (gly residues). Disordered regions lie at residues 1 to 42 (MEPS…FTLK) and 54 to 83 (SMRI…TAQS). Residue serine 22 is modified to Phosphoserine. Positions 54-65 (SMRIKKEKEKPN) are enriched in basic and acidic residues. Over residues 67 to 83 (AHRNSSASYGDDPTAQS) the composition is skewed to polar residues. The 366-residue stretch at 84–449 (LQDISDDQVL…QIVLHKNGTD (366 aa)) folds into the GBD/FH3 domain. Positions 474–568 (VEKSEAKATE…KKEMASLSAV (95 aa)) form a coiled coil. The interval 573–742 (SVSSSAAVPQ…PPPPGMGVPP (170 aa)) is disordered. Composition is skewed to pro residues over residues 594–628 (IPPP…PPLP) and 645–742 (IPPP…GVPP). In terms of domain architecture, FH1 spans 625–757 (PPLPGGACIS…FGIPAAPVLP (133 aa)). At threonine 761 the chain carries Phosphothreonine. The FH2 domain maps to 762–1164 (PKKVYKPEVQ…MRRAKLAKEK (403 aa)). N6-acetyllysine occurs at positions 1050 and 1096. Tyrosine 1114 is subject to Phosphotyrosine. Residues 1141–1185 (AVKENQKRRETEEKMRRAKLAKEKAEKERLEKQQKREQLIDMNAE) adopt a coiled-coil conformation. In terms of domain architecture, DAD spans 1187 to 1215 (DETGVMDSLLEALQSGAAFRRKRGPRQVN). Position 1247 is a phosphoserine (serine 1247).

It belongs to the formin homology family. Diaphanous subfamily. As to quaternary structure, homodimer. Interacts with the GTP-bound form of RHOA. Interacts with RHOC, PFY1, MAPRE1, BAIAP2 and APC. Interacts with SCAI. Interacts with DCAF7, via FH2 domain. Interacts with NCDN. Interacts with OSBPL10, OSBPL2, VIM, TUBB and DYN1. Post-translationally, phosphorylation at Thr-761 is stimulated by cAMP and regulates stability, complex formation and mitochondrial movement. In terms of tissue distribution, expressed in testis. Present in Sertoli cells (at protein level).

Its subcellular location is the cell membrane. The protein localises to the cell projection. It is found in the ruffle membrane. It localises to the cytoplasm. The protein resides in the cytoskeleton. Its subcellular location is the microtubule organizing center. The protein localises to the centrosome. It is found in the spindle. It localises to the nucleus. Actin nucleation and elongation factor required for the assembly of F-actin structures, such as actin cables and stress fibers. Binds to the barbed end of the actin filament and slows down actin polymerization and depolymerization. Required for cytokinesis, and transcriptional activation of the serum response factor. DFR proteins couple Rho and Src tyrosine kinase during signaling and the regulation of actin dynamics. Functions as a scaffold protein for MAPRE1 and APC to stabilize microtubules and promote cell migration. Has neurite outgrowth promoting activity. Acts in a Rho-dependent manner to recruit PFY1 to the membrane. The MEMO1-RHOA-DIAPH1 signaling pathway plays an important role in ERBB2-dependent stabilization of microtubules at the cell cortex. It controls the localization of APC and CLASP2 to the cell membrane, via the regulation of GSK3B activity. In turn, membrane-bound APC allows the localization of the MACF1 to the cell membrane, which is required for microtubule capture and stabilization. Plays a role in the regulation of cell morphology and cytoskeletal organization. Required in the control of cell shape. Also acts as an actin nucleation and elongation factor in the nucleus by promoting nuclear actin polymerization inside the nucleus to drive serum-dependent SRF-MRTFA activity. This is Protein diaphanous homolog 1 from Rattus norvegicus (Rat).